The sequence spans 667 residues: DNA ligase (667 aa).

NAD(+) is bound by residues 32–36 (DKDYD) and 80–81 (SL). The active-site N6-AMP-lysine intermediate is the lysine 121. The NAD(+) site is built by arginine 143, glutamate 178, and lysine 314. Zn(2+) is bound by residues cysteine 407, cysteine 410, cysteine 423, and cysteine 429. Residues 587–667 (IVESIFKDKT…EFEKMLGRES (81 aa)) enclose the BRCT domain.

It belongs to the NAD-dependent DNA ligase family. LigA subfamily. The cofactor is Mg(2+). Mn(2+) serves as cofactor.

The catalysed reaction is NAD(+) + (deoxyribonucleotide)n-3'-hydroxyl + 5'-phospho-(deoxyribonucleotide)m = (deoxyribonucleotide)n+m + AMP + beta-nicotinamide D-nucleotide.. Its function is as follows. DNA ligase that catalyzes the formation of phosphodiester linkages between 5'-phosphoryl and 3'-hydroxyl groups in double-stranded DNA using NAD as a coenzyme and as the energy source for the reaction. It is essential for DNA replication and repair of damaged DNA. In Clostridium botulinum (strain Alaska E43 / Type E3), this protein is DNA ligase.